A 150-amino-acid polypeptide reads, in one-letter code: SsrA-binding protein (150 aa).

Residues 129–150 (KRQTLKSKEADREMARALRDRH) form a disordered region.

It belongs to the SmpB family.

Its subcellular location is the cytoplasm. In terms of biological role, required for rescue of stalled ribosomes mediated by trans-translation. Binds to transfer-messenger RNA (tmRNA), required for stable association of tmRNA with ribosomes. tmRNA and SmpB together mimic tRNA shape, replacing the anticodon stem-loop with SmpB. tmRNA is encoded by the ssrA gene; the 2 termini fold to resemble tRNA(Ala) and it encodes a 'tag peptide', a short internal open reading frame. During trans-translation Ala-aminoacylated tmRNA acts like a tRNA, entering the A-site of stalled ribosomes, displacing the stalled mRNA. The ribosome then switches to translate the ORF on the tmRNA; the nascent peptide is terminated with the 'tag peptide' encoded by the tmRNA and targeted for degradation. The ribosome is freed to recommence translation, which seems to be the essential function of trans-translation. This Syntrophotalea carbinolica (strain DSM 2380 / NBRC 103641 / GraBd1) (Pelobacter carbinolicus) protein is SsrA-binding protein.